Here is a 495-residue protein sequence, read N- to C-terminus: MKKLTALWDIDEQLDSVHRDIELQEMILDSRLANTGCLFVAIKGHRVDGREFIMQAIQNGASAVLFETDLVEQHLTVSFEQNIPLIAYYELSKHLSHIADRFYSSPSQRLTLVGVTGTNGKTTIAQLLAQWTQILGHTSAVMGTIGNGLFGQIKEASNTTGSAIEIQSSLDKFIRQGADFAAIEVSSHGLVQHRVEALTFRAGIFTNLSRDHLDYHHTMENYAQAKKRLFSELNCQHKILNVDDEIGATWLIELSKDDPDVVAVSCRADYQPDTKNWLKATALSFHSKGTTIEFASSWGNGILSSPLIGGFNVSNLLLVLATLLSLGYDIGKLLATVRQLTGVCGRMEMLSAKHKATVIVDYAHTPDALENALQSAAVHCQGKLWCIFGCGGDRDRGKRPLMAAIAEKFADSVIVTDDNPRTENPEQIMQDILTGFQQSSAVQIIHQREQAIKTALQSAVENDVVLIAGKGHENYQIIGTTKYHFSDQEIVKKYF.

UDP-N-acetyl-alpha-D-muramoyl-L-alanyl-D-glutamate contacts are provided by residues Leu-28, Ser-30, and 45-47; that span reads HRV. Residue 117 to 123 participates in ATP binding; that stretch reads GTNGKTT. UDP-N-acetyl-alpha-D-muramoyl-L-alanyl-D-glutamate contacts are provided by residues Asn-158, 159–160, Ser-186, Gln-192, and Arg-194; that span reads TT. Lys-226 is modified (N6-carboxylysine). Meso-2,6-diaminopimelate contacts are provided by residues Arg-394, 418 to 421, Gly-469, and Glu-473; that span reads DNPR. The Meso-diaminopimelate recognition motif motif lies at 418-421; it reads DNPR.

The protein belongs to the MurCDEF family. MurE subfamily. It depends on Mg(2+) as a cofactor. Carboxylation is probably crucial for Mg(2+) binding and, consequently, for the gamma-phosphate positioning of ATP.

Its subcellular location is the cytoplasm. It catalyses the reaction UDP-N-acetyl-alpha-D-muramoyl-L-alanyl-D-glutamate + meso-2,6-diaminopimelate + ATP = UDP-N-acetyl-alpha-D-muramoyl-L-alanyl-gamma-D-glutamyl-meso-2,6-diaminopimelate + ADP + phosphate + H(+). It functions in the pathway cell wall biogenesis; peptidoglycan biosynthesis. Catalyzes the addition of meso-diaminopimelic acid to the nucleotide precursor UDP-N-acetylmuramoyl-L-alanyl-D-glutamate (UMAG) in the biosynthesis of bacterial cell-wall peptidoglycan. This chain is UDP-N-acetylmuramoyl-L-alanyl-D-glutamate--2,6-diaminopimelate ligase, found in Histophilus somni (strain 129Pt) (Haemophilus somnus).